The sequence spans 359 residues: MKATIILLLLAQVSWAGPFQQRGLFDFMLEDEASGIGPEVPDDRDFEPSLGPVCPFRCQCHLRVVQCSDLGLDKVPKDLPPDTTLLDLQNNKITEIKDGDFKNLKNLHALILVNNKISKVSPGAFTPLVKLERLYLSKNQLKELPEKMPKTLQELRAHENEITKVRKVTFNGLNQMIVIELGTNPLKSSGIENGAFQGMKKLSYIRIADTNITSIPQGLPPSLTELHLDGNKISRVDAASLKGLNNLAKLGLSFNSISAVDNGSLANTPHLRELHLDNNKLTRVPGGLAEHKYIQVVYLHNNNISVVGSSDFCPPGHNTKKASYSGVSLFSNPVQYWEIQPSTFRCVYVRSAIQLGNYK.

The N-terminal stretch at 1 to 16 (MKATIILLLLAQVSWA) is a signal peptide. A propeptide spanning residues 17-30 (GPFQQRGLFDFMLE) is cleaved from the precursor. O-linked (Xyl...) (glycosaminoglycan) serine glycosylation is present at serine 34. 2 disulfides stabilise this stretch: cysteine 54-cysteine 60 and cysteine 58-cysteine 67. LRR repeat units follow at residues 73–93 (DKVPKDLPPDTTLLDLQNNKI), 94–117 (TEIKDGDFKNLKNLHALILVNNKI), 118–141 (SKVSPGAFTPLVKLERLYLSKNQL), 142–162 (KELPEKMPKTLQELRAHENEI), 163–186 (TKVRKVTFNGLNQMIVIELGTNPL), 187–212 (KSSGIENGAFQGMKKLSYIRIADTNI), 213–233 (TSIPQGLPPSLTELHLDGNKI), 234–257 (SRVDAASLKGLNNLAKLGLSFNSI), 258–281 (SAVDNGSLANTPHLRELHLDNNKL), 282–304 (TRVPGGLAEHKYIQVVYLHNNNI), 305–334 (SVVGSSDFCPPGHNTKKASYSGVSLFSNPV), and 335–359 (QYWEIQPSTFRCVYVRSAIQLGNYK). N-linked (GlcNAc...) asparagine glycosylation is present at asparagine 211. 2 N-linked (GlcNAc...) asparagine glycosylation sites follow: asparagine 262 and asparagine 303. Cysteine 313 and cysteine 346 form a disulfide bridge.

Belongs to the small leucine-rich proteoglycan (SLRP) family. SLRP class I subfamily. Binds to type I and type II collagen, fibronectin and TGF-beta. Forms a ternary complex with MFAP2 and ELN. Interacts with DPT. The attached glycosaminoglycan chain can be either chondroitin sulfate or dermatan sulfate depending upon the tissue of origin. Detected in placenta (at protein level). Detected in cerebrospinal fluid, fibroblasts and urine (at protein level).

The protein resides in the secreted. It is found in the extracellular space. Its subcellular location is the extracellular matrix. Its function is as follows. May affect the rate of fibrils formation. The sequence is that of Decorin (DCN) from Homo sapiens (Human).